Reading from the N-terminus, the 409-residue chain is MAQNFTKLNPQFENIIFEHDDNQMILNFGPQHPSSHGQLRLILELEGEKIIKATPEIGYLHRGCEKLGENMTYNEYMPTTDRLDYTSSTSNNYAYAHAVETLLNLEIPRRAQVIRTILLELNRMISHIFFISVHALDVGAMSVFLYAFKTREYGLDLMEDYCGARLTHNAIRIGGVPLDLPPNWLEGLKKFLGEMRECKKLIQGLLDKNRIWRMRLENVGVVTPKMAQSWGMSGIMLRGSGIAYDIRKEEPYELYKELDFDVPVGNYGDSYDRYCLYMLEIDESIRIIEQLIPMYAKTDTPIMAQNPHYISAPKEDIMTQNYALMQHFVLVAQGMRPPVGEVYAPTESPKGELGFFIHSEGEPYPHRLKIRAPSFYHIGALSDILVGQYLADAVTVIGSTNAVFGEVDR.

The protein belongs to the complex I 49 kDa subunit family. NDH-1 is composed of 14 different subunits. Subunits NuoB, C, D, E, F, and G constitute the peripheral sector of the complex.

It is found in the cell inner membrane. It catalyses the reaction a quinone + NADH + 5 H(+)(in) = a quinol + NAD(+) + 4 H(+)(out). In terms of biological role, NDH-1 shuttles electrons from NADH, via FMN and iron-sulfur (Fe-S) centers, to quinones in the respiratory chain. The immediate electron acceptor for the enzyme in this species is believed to be ubiquinone. Couples the redox reaction to proton translocation (for every two electrons transferred, four hydrogen ions are translocated across the cytoplasmic membrane), and thus conserves the redox energy in a proton gradient. In Helicobacter pylori (strain Shi470), this protein is NADH-quinone oxidoreductase subunit D.